Reading from the N-terminus, the 457-residue chain is Probable mitochondrial-processing peptidase subunit beta (457 aa).

Residue His66 coordinates Zn(2+). The active-site Proton acceptor is the Glu69. Zn(2+)-binding residues include His70 and Glu146.

The protein belongs to the peptidase M16 family. Heterodimer of mas2 (alpha) and qcr1 (beta) subunits, forming the mitochondrial processing protease (MPP) in which mas2 is involved in substrate recognition and binding and qcr1 is the catalytic subunit. It depends on Zn(2+) as a cofactor.

The protein localises to the mitochondrion matrix. The catalysed reaction is Release of N-terminal transit peptides from precursor proteins imported into the mitochondrion, typically with Arg in position P2.. With respect to regulation, binding to mas2 is required for catalytic activity. Its function is as follows. Catalytic subunit of the essential mitochondrial processing protease (MPP), which cleaves the mitochondrial sequence off newly imported precursors proteins. Preferentially, cleaves after an arginine at position P2. The protein is Probable mitochondrial-processing peptidase subunit beta (qcr1) of Schizosaccharomyces pombe (strain 972 / ATCC 24843) (Fission yeast).